The sequence spans 1812 residues: Protein virilizer homolog (1812 aa).

Ala2 bears the N-acetylalanine mark. Disordered regions lie at residues 132–302 (ISHD…EQIS) and 576–596 (KTSSLPNHSEPDHDTDAGLER). A phosphoserine mark is found at Ser133 and Ser138. A compositionally biased stretch (pro residues) spans 139 to 152 (PPPPPPPPPPPQPQ). Basic and acidic residues predominate over residues 160-169 (KHADGEKEDQ). Ser173 is modified (phosphoserine). Over residues 174 to 190 (PPRPQPRGPRTPPGPPP) the composition is skewed to pro residues. Thr184 carries the phosphothreonine modification. Position 222 is a phosphoserine (Ser222). Over residues 224–233 (DRNSVPQEGQ) the composition is skewed to polar residues. Acidic residues-rich tracts occupy residues 234–266 (YSDEGEVEEEQQEEGEEDEDDVDVEEEEDEDED) and 274–302 (IPEEEEEDEEEEGEEDEEGEGDDGYEQIS). The span at 584-596 (SEPDHDTDAGLER) shows a compositional bias: basic and acidic residues. At Tyr914 the chain carries Phosphotyrosine. Residue Ser1579 is modified to Phosphoserine. 2 disordered regions span residues 1616–1635 (HVVPPPRGRGRGGFGQGIRP) and 1663–1812 (KEVV…SFTR). The span at 1689–1698 (GFSGNRGGRG) shows a compositional bias: gly residues. A Phosphothreonine modification is found at Thr1708. Arg1723 is modified (omega-N-methylarginine). Residues 1723–1748 (RGSSWSAQNTPRGNYNESRGGQSNFN) show a composition bias toward polar residues. An Asymmetric dimethylarginine; alternate modification is found at Arg1741. Arg1741 carries the post-translational modification Omega-N-methylarginine; alternate. An asymmetric dimethylarginine mark is found at Arg1773, Arg1775, and Arg1793. Residues 1788–1802 (GSGGSRGKFVSGGSG) are compositionally biased toward gly residues. Residues 1803 to 1812 (RGRHVRSFTR) are compositionally biased toward basic residues.

It belongs to the vir family. In terms of assembly, component of the WMM complex, a N6-methyltransferase complex composed of a catalytic subcomplex, named MAC, and of an associated subcomplex, named MACOM. The MAC subcomplex is composed of METTL3 and METTL14. The MACOM subcomplex is composed of WTAP, ZC3H13, CBLL1/HAKAI, VIRMA, and, in some cases of RBM15 (RBM15 or RBM15B). Interacts with WTAP. Also a component of a MACOM-like complex, named WTAP complex, composed of WTAP, ZC3H13, CBLL1, VIRMA, RBM15, BCLAF1 and THRAP3. Interacts with NUDT21 and CPSF6.

Its subcellular location is the nucleus speckle. The protein localises to the nucleus. It is found in the nucleoplasm. The protein resides in the cytoplasm. In terms of biological role, associated component of the WMM complex, a complex that mediates N6-methyladenosine (m6A) methylation of RNAs, a modification that plays a role in the efficiency of mRNA splicing and RNA processing. Acts as a key regulator of m6A methylation by promoting m6A methylation of mRNAs in the 3'-UTR near the stop codon: recruits the catalytic core components METTL3 and METTL14, thereby guiding m6A methylation at specific sites. Required for mRNA polyadenylation via its role in selective m6A methylation: m6A methylation of mRNAs in the 3'-UTR near the stop codon correlating with alternative polyadenylation (APA). This Homo sapiens (Human) protein is Protein virilizer homolog.